A 311-amino-acid chain; its full sequence is ATP synthase subunit a (311 aa).

Helical transmembrane passes span 62–82 (AVHV…GFIF), 123–143 (IAPM…MDLI), 170–190 (DPNA…MFSI), 213–233 (LWYL…VALI), 253–273 (IFIL…VGGV), and 276–296 (WAWA…FMVL).

It belongs to the ATPase A chain family. F-type ATPases have 2 components, CF(1) - the catalytic core - and CF(0) - the membrane proton channel. CF(1) has five subunits: alpha(3), beta(3), gamma(1), delta(1), epsilon(1). CF(0) has three main subunits: a(1), b(2) and c(9-12). The alpha and beta chains form an alternating ring which encloses part of the gamma chain. CF(1) is attached to CF(0) by a central stalk formed by the gamma and epsilon chains, while a peripheral stalk is formed by the delta and b chains.

It localises to the cell inner membrane. Key component of the proton channel; it plays a direct role in the translocation of protons across the membrane. In Saccharophagus degradans (strain 2-40 / ATCC 43961 / DSM 17024), this protein is ATP synthase subunit a.